Reading from the N-terminus, the 400-residue chain is MGTPGSGRKRTPVKDRFSAEDEALSNIDREAEARLAAKRAARAEARDIRMRELERQQKELDEKSDKQYAENYTRPSSRNSASATTPLSGNSSRRVSGDTSSLIDPDTSLSELRESLSEVEEKYKKAMVSNAQLDNEKNNLIYQVDTLKDVIEEQEEQMAEFYRENEEKSKELERQKHMCSVLQHKMDELKEGLRQRDELIEKHGLVIIPDGTPNGDVHQEPAVGAITVVSQEAAQVLESAGEGPLDVRLRKLAGEKEELLSQIRKLKLQLEEERQKCSGRDGTAGDLAELQNGSDLQLIEMQRDANRQISEYKFKLSKAEQDITTLEQSISRLEGQVLRYRTAAENAEKVEDELKAEKRKLQRELRTALDKIEEMEMTNSHLAKRLEKMKANRTALLAQQ.

Disordered regions lie at residues 1–28 and 53–119; these read MGTP…SNID and LERQ…LSEV. Ser18 is modified (phosphoserine). Residues 29–71 are a coiled coil; the sequence is REAEARLAAKRAARAEARDIRMRELERQQKELDEKSDKQYAEN. Positions 53 to 68 are enriched in basic and acidic residues; the sequence is LERQQKELDEKSDKQY. The span at 73-102 shows a compositional bias: polar residues; sequence TRPSSRNSASATTPLSGNSSRRVSGDTSSL. Ser77, Ser80, Ser88, Ser92, and Ser96 each carry phosphoserine. Phosphothreonine is present on Thr99. Phosphoserine occurs at positions 100 and 101. Coiled coils occupy residues 106 to 202 and 245 to 393; these read DTSL…LIEK and LDVR…KANR.

The protein belongs to the LRRFIP family. In terms of assembly, interacts with DVL3 and FLII. Weakly interacts with MYD88 in resting cells. Following LPS-stimulation, the interaction with MYD88 is rapidly enhanced; the complex gradually dissociates to basal levels after 6 hours of stimulation. Interaction with MYD88 is regulated by LPS-induced phosphorylation. In the presence of LPS, competes with FLII for MYD88-binding.

Its function is as follows. May function as activator of the canonical Wnt signaling pathway, in association with DVL3, upstream of CTNNB1/beta-catenin. Positively regulates Toll-like receptor (TLR) signaling in response to agonist probably by competing with the negative FLII regulator for MYD88-binding. The sequence is that of Leucine-rich repeat flightless-interacting protein 2 (LRRFIP2) from Bos taurus (Bovine).